The sequence spans 130 residues: Iron-sulfur cluster insertion protein ErpA (130 aa).

Residues C46, C116, and C118 each coordinate iron-sulfur cluster.

The protein belongs to the HesB/IscA family. In terms of assembly, homodimer. Iron-sulfur cluster serves as cofactor.

Functionally, required for insertion of 4Fe-4S clusters for at least IspG. The chain is Iron-sulfur cluster insertion protein ErpA from Legionella pneumophila (strain Paris).